The following is a 270-amino-acid chain: Tryptophan synthase alpha chain (270 aa).

Active-site proton acceptor residues include E49 and D60.

The protein belongs to the TrpA family. In terms of assembly, tetramer of two alpha and two beta chains.

The catalysed reaction is (1S,2R)-1-C-(indol-3-yl)glycerol 3-phosphate + L-serine = D-glyceraldehyde 3-phosphate + L-tryptophan + H2O. It functions in the pathway amino-acid biosynthesis; L-tryptophan biosynthesis; L-tryptophan from chorismate: step 5/5. In terms of biological role, the alpha subunit is responsible for the aldol cleavage of indoleglycerol phosphate to indole and glyceraldehyde 3-phosphate. The protein is Tryptophan synthase alpha chain of Paraburkholderia phytofirmans (strain DSM 17436 / LMG 22146 / PsJN) (Burkholderia phytofirmans).